The following is a 231-amino-acid chain: 2-C-methyl-D-erythritol 4-phosphate cytidylyltransferase (231 aa).

Belongs to the IspD/TarI cytidylyltransferase family. IspD subfamily.

The catalysed reaction is 2-C-methyl-D-erythritol 4-phosphate + CTP + H(+) = 4-CDP-2-C-methyl-D-erythritol + diphosphate. It functions in the pathway isoprenoid biosynthesis; isopentenyl diphosphate biosynthesis via DXP pathway; isopentenyl diphosphate from 1-deoxy-D-xylulose 5-phosphate: step 2/6. Functionally, catalyzes the formation of 4-diphosphocytidyl-2-C-methyl-D-erythritol from CTP and 2-C-methyl-D-erythritol 4-phosphate (MEP). In Pseudoalteromonas atlantica (strain T6c / ATCC BAA-1087), this protein is 2-C-methyl-D-erythritol 4-phosphate cytidylyltransferase.